We begin with the raw amino-acid sequence, 236 residues long: MSIHIAAQQGEIADKILLPGDPLRAKFIAENFLDDAVCFNEVRNMFGYTGTYKGHCVSVMGTGMGMPSISIYARELIVDYGVKKLIRVGTAGSLNEEVHVRELVLAQAAATNSNIVRNDWPQYDFPQIASFDLLDKAYHIAKKLGMTTHVGNVLSSDVFYSNYFEKNIELGKWGVKAVEMEAAALYYLAAQYHVDALAIMTISDSLVNPDEDTTAEERQNTFTDMMKVGLETLIAE.

Histidine 4 contacts a purine D-ribonucleoside. Residues glycine 20, arginine 24, arginine 43, and arginine 87–threonine 90 contribute to the phosphate site. Residues glutamate 179–glutamate 181 and serine 203–aspartate 204 contribute to the a purine D-ribonucleoside site. Aspartate 204 acts as the Proton donor in catalysis.

This sequence belongs to the PNP/UDP phosphorylase family. In terms of assembly, homohexamer; trimer of homodimers.

The enzyme catalyses a purine D-ribonucleoside + phosphate = a purine nucleobase + alpha-D-ribose 1-phosphate. The catalysed reaction is a purine 2'-deoxy-D-ribonucleoside + phosphate = a purine nucleobase + 2-deoxy-alpha-D-ribose 1-phosphate. Functionally, catalyzes the reversible phosphorolytic breakdown of the N-glycosidic bond in the beta-(deoxy)ribonucleoside molecules, with the formation of the corresponding free purine bases and pentose-1-phosphate. This Streptococcus pneumoniae (strain CGSP14) protein is Purine nucleoside phosphorylase DeoD-type.